The chain runs to 286 residues: tRNA(Ile)-lysidine synthase (286 aa).

7-12 (SGGPDS) provides a ligand contact to ATP.

Belongs to the tRNA(Ile)-lysidine synthase family.

It is found in the cytoplasm. It catalyses the reaction cytidine(34) in tRNA(Ile2) + L-lysine + ATP = lysidine(34) in tRNA(Ile2) + AMP + diphosphate + H(+). Its function is as follows. Ligates lysine onto the cytidine present at position 34 of the AUA codon-specific tRNA(Ile) that contains the anticodon CAU, in an ATP-dependent manner. Cytidine is converted to lysidine, thus changing the amino acid specificity of the tRNA from methionine to isoleucine. In Mycoplasmopsis pulmonis (strain UAB CTIP) (Mycoplasma pulmonis), this protein is tRNA(Ile)-lysidine synthase.